Consider the following 504-residue polypeptide: Maturase K (504 aa).

The protein belongs to the intron maturase 2 family. MatK subfamily.

Its subcellular location is the plastid. It localises to the chloroplast. Usually encoded in the trnK tRNA gene intron. Probably assists in splicing its own and other chloroplast group II introns. The chain is Maturase K from Amaranthus caudatus (Love-lies-bleeding).